The primary structure comprises 68 residues: DNA gyrase inhibitor YacG (68 aa).

Residues cysteine 10, cysteine 13, cysteine 29, and cysteine 33 each contribute to the Zn(2+) site.

This sequence belongs to the DNA gyrase inhibitor YacG family. Interacts with GyrB. Requires Zn(2+) as cofactor.

Inhibits all the catalytic activities of DNA gyrase by preventing its interaction with DNA. Acts by binding directly to the C-terminal domain of GyrB, which probably disrupts DNA binding by the gyrase. This is DNA gyrase inhibitor YacG from Haemophilus influenzae (strain PittGG).